A 1196-amino-acid chain; its full sequence is uncharacterized protein (1196 aa).

A helical membrane pass occupies residues 27–47 (ILLLLGSFILLNVWINVVTLL). Disordered stretches follow at residues 150–345 (GGGE…PQAH), 367–402 (SSVP…ASAP), 669–762 (TQDS…QKNT), 775–806 (CLTQ…DSGI), 826–877 (QATD…QDSE), 960–1009 (YRSS…GPYK), and 1168–1196 (KCEA…DIRM). Residues 157-177 (VTASKAQASLLSRPETSSQFP) are compositionally biased toward polar residues. Low complexity-rich tracts occupy residues 212-227 (HSPT…HPWT) and 253-279 (THSQ…TPAH). Positions 299–321 (HTSAQAQTHSPPHTPEYTHSQAH) are enriched in polar residues. The span at 391–402 (APTPAPVPASAP) shows a compositional bias: pro residues. 4 stretches are compositionally biased toward polar residues: residues 733-742 (YLCQNPSPSQ), 750-762 (SGIT…QKNT), 787-804 (PFTQ…TQDS), and 826-849 (QATD…TGNV). Residues 962-971 (SSEHSQDSNL) are compositionally biased toward basic and acidic residues.

It localises to the membrane. This is an uncharacterized protein from Homo sapiens (Human).